The primary structure comprises 179 residues: Large ribosomal subunit protein uL5 (179 aa).

Belongs to the universal ribosomal protein uL5 family. In terms of assembly, part of the 50S ribosomal subunit; part of the 5S rRNA/L5/L18/L25 subcomplex. Contacts the 5S rRNA and the P site tRNA. Forms a bridge to the 30S subunit in the 70S ribosome.

In terms of biological role, this is one of the proteins that bind and probably mediate the attachment of the 5S RNA into the large ribosomal subunit, where it forms part of the central protuberance. In the 70S ribosome it contacts protein S13 of the 30S subunit (bridge B1b), connecting the 2 subunits; this bridge is implicated in subunit movement. Contacts the P site tRNA; the 5S rRNA and some of its associated proteins might help stabilize positioning of ribosome-bound tRNAs. The polypeptide is Large ribosomal subunit protein uL5 (Photorhabdus laumondii subsp. laumondii (strain DSM 15139 / CIP 105565 / TT01) (Photorhabdus luminescens subsp. laumondii)).